The sequence spans 500 residues: L-arabinose isomerase (500 aa).

Residues Glu-306, Glu-333, His-350, and His-450 each coordinate Mn(2+).

The protein belongs to the arabinose isomerase family. As to quaternary structure, homohexamer. Requires Mn(2+) as cofactor.

It catalyses the reaction beta-L-arabinopyranose = L-ribulose. It participates in carbohydrate degradation; L-arabinose degradation via L-ribulose; D-xylulose 5-phosphate from L-arabinose (bacterial route): step 1/3. Its function is as follows. Catalyzes the conversion of L-arabinose to L-ribulose. This Yersinia pseudotuberculosis serotype I (strain IP32953) protein is L-arabinose isomerase.